Here is a 198-residue protein sequence, read N- to C-terminus: Inosine triphosphate pyrophosphatase (198 aa).

Ala-2 bears the N-acetylalanine mark. 14-19 (TGNAKK) is a binding site for ITP. Glu-44 contributes to the Mg(2+) binding site. ITP-binding positions include Lys-56, 72–73 (DT), and Lys-89. Phosphoserine is present on Ser-146. ITP contacts are provided by residues 149-152 (FGWD), Lys-172, and 177-178 (HR).

This sequence belongs to the HAM1 NTPase family. As to quaternary structure, homodimer. The cofactor is Mg(2+). Requires Mn(2+) as cofactor.

It localises to the cytoplasm. The catalysed reaction is ITP + H2O = IMP + diphosphate + H(+). It catalyses the reaction dITP + H2O = dIMP + diphosphate + H(+). It carries out the reaction XTP + H2O = XMP + diphosphate + H(+). The enzyme catalyses N(6)-hydroxy-dATP + H2O = N(6)-hydroxy-dAMP + diphosphate + H(+). Functionally, pyrophosphatase that hydrolyzes the non-canonical purine nucleotides inosine triphosphate (ITP), deoxyinosine triphosphate (dITP) as well as 2'-deoxy-N-6-hydroxylaminopurine triphosphate (dHAPTP) and xanthosine 5'-triphosphate (XTP) to their respective monophosphate derivatives. The enzyme does not distinguish between the deoxy- and ribose forms. Probably excludes non-canonical purines from RNA and DNA precursor pools, thus preventing their incorporation into RNA and DNA and avoiding chromosomal lesions. This Mus musculus (Mouse) protein is Inosine triphosphate pyrophosphatase (Itpa).